Reading from the N-terminus, the 405-residue chain is MKRTFILMLDSFGVGAATDADKFGDVGSDTFGHIAQACADGKADIGRQGPLKLPNLARFGLGHAGFESTGKFAAGFADNVEVIGAYGHADELSSGKDTPSGHWEMAGVPVLYEWGYFSDLTNSFPKELTDKILERAGLDGFLGNCHASGTQILEELGEEHMKTGKPIFYTSADSVFQIACHEESFGVENLYNLCKIAREELEPYNIGRVIARPFVGTGPADFARTGNRHDYAVLPPAPTVLDKLKDAGGEVVSIGKISDIYAHSGITQQFKATGLEELFDETLAQIKRAGDNTIVFTNFVDFDSHYGHRRDTAGYAKALEYFDSRLPELLAILQPEDLVIFTADHGCDPTWVGTEHTRERVPVLAYGAGLSAGSLGRRKSFADIGQSIASYFKLEPMNYGESFIN.

Residues D10, D303, H308, D344, H345, and H356 each coordinate Mn(2+).

Belongs to the phosphopentomutase family. Mn(2+) is required as a cofactor.

Its subcellular location is the cytoplasm. The catalysed reaction is 2-deoxy-alpha-D-ribose 1-phosphate = 2-deoxy-D-ribose 5-phosphate. It carries out the reaction alpha-D-ribose 1-phosphate = D-ribose 5-phosphate. It participates in carbohydrate degradation; 2-deoxy-D-ribose 1-phosphate degradation; D-glyceraldehyde 3-phosphate and acetaldehyde from 2-deoxy-alpha-D-ribose 1-phosphate: step 1/2. Functionally, isomerase that catalyzes the conversion of deoxy-ribose 1-phosphate (dRib-1-P) and ribose 1-phosphate (Rib-1-P) to deoxy-ribose 5-phosphate (dRib-5-P) and ribose 5-phosphate (Rib-5-P), respectively. In Shewanella frigidimarina (strain NCIMB 400), this protein is Phosphopentomutase.